The primary structure comprises 456 residues: G-protein coupled receptor 39 (456 aa).

Residues 1 to 34 lie on the Extracellular side of the membrane; that stretch reads MASSSGSNHICSRVIDHSHVPEFEVATWIKITLI. 2 disulfides stabilise this stretch: C11-C191 and C108-C210. 2 residues coordinate Zn(2+): H17 and H19. The chain crosses the membrane as a helical span at residues 35-55; that stretch reads LVYLIIFVVGILGNSVTIRVT. The Cytoplasmic portion of the chain corresponds to 56 to 69; that stretch reads QVLQKKGYLQKEVT. Residues 70–89 traverse the membrane as a helical segment; sequence DHMVSLACSDILVFLIGMPM. Topologically, residues 90–109 are extracellular; the sequence is EFYSIIWNPLTTPSYALSCK. Residues 110–131 traverse the membrane as a helical segment; that stretch reads LHTFLFETCSYATLLHVLTLSF. Residues 132-151 lie on the Cytoplasmic side of the membrane; sequence ERYIAICHPFKYKAVSGPRQ. The helical transmembrane segment at 152–172 threads the bilayer; sequence VKLLIGFVWVTSALVALPLLF. Residues 173–217 are Extracellular-facing; it reads AMGIEYPLVNVPTHKGLNCNLSRTRHHDEPGNSNMSICTNLSNRW. Residues N192 and N206 are each glycosylated (N-linked (GlcNAc...) asparagine). A helical transmembrane segment spans residues 218–242; it reads EVFQSSIFGAFAVYLVVLASVAFMC. The Cytoplasmic portion of the chain corresponds to 243 to 283; sequence WNMMKVLMKSKQGTLAGTGPQLQLRKSESEESRTARRQTII. A helical transmembrane segment spans residues 284 to 305; it reads FLRLIVVTLAVCWMPNQIRRIM. Over 306 to 323 the chain is Extracellular; that stretch reads AAAKPKHDWTRTYFRAYM. The helical transmembrane segment at 324–344 threads the bilayer; the sequence is ILLPFSDTFFYLSSVVNPLLY. Residues 345–456 are Cytoplasmic-facing; sequence NVSSQQFRKV…TENSLQEQEV (112 aa). A Phosphoserine modification is found at S397. The tract at residues 415-456 is disordered; the sequence is FQTEAKPGEAKPQPLSPESPQTGSETKPAGSTTENSLQEQEV. A compositionally biased stretch (polar residues) spans 430–456; sequence SPESPQTGSETKPAGSTTENSLQEQEV.

Belongs to the G-protein coupled receptor 1 family. In terms of assembly, interacts with HTR1A. Interacts with GALR1. In terms of tissue distribution, expression is detected in septumamygdala, parietal cells, enterocytes, neurons and pancreas, in peripheral organs such as the duodenum and kidney but not in the pituitary and hypothalamus.

It localises to the cell membrane. In terms of biological role, zinc-sensing receptor that can sense changes in extracellular Zn(2+), mediate Zn(2+) signal transmission, and participates in the regulation of numerous physiological processes including glucose homeostasis regulation, gastrointestinal mobility, hormone secretion and cell death. Activation by Zn(2+) in keratinocytes increases the intracellular concentration of Ca(2+) and activates the ERK/MAPK and PI3K/AKT signaling pathways leading to epithelial repair. Plays an essential role in normal wound healing by inducing the production of cytokines including the major inflammatory cytokine IL6 via the PKC/MAPK/CEBPB pathway. Regulates adipose tissue metabolism, especially lipolysis, and regulates the function of lipases, such as hormone-sensitive lipase and adipose triglyceride lipase. Plays a role in the inhibition of cell death and protects against oxidative, endoplasmic reticulum and mitochondrial stress by inducing secretion of the cytoprotective pigment epithelium-derived growth factor (PEDF) and probably other protective transcripts in a GNA13/RHOA/SRE-dependent manner. Forms dynamic heteroreceptor complexes with HTR1A and GALR1 depending on cell type or specific physiological states, resulting in signaling diversity: HTR1A-GPR39 shows additive increase in signaling along the serum response element (SRE) and NF-kappa-B pathways while GALR1 acts as an antagonist blocking SRE. This Mus musculus (Mouse) protein is G-protein coupled receptor 39 (Gpr39).